A 439-amino-acid polypeptide reads, in one-letter code: GTPase Der (439 aa).

EngA-type G domains are found at residues Pro4–Glu168 and Ile177–Thr352. GTP is bound by residues Gly10–Ser17, Asp57–Ile61, Asn120–Asp123, Gly183–Ser190, Asp230–Leu234, and Asn295–Asp298. One can recognise a KH-like domain in the interval Lys353 to Lys437.

The protein belongs to the TRAFAC class TrmE-Era-EngA-EngB-Septin-like GTPase superfamily. EngA (Der) GTPase family. As to quaternary structure, associates with the 50S ribosomal subunit.

GTPase that plays an essential role in the late steps of ribosome biogenesis. This chain is GTPase Der, found in Clostridium botulinum (strain Loch Maree / Type A3).